The sequence spans 106 residues: ADAAPTVSIFPPSTEQLATGGASVVCLMNNFYPRDISVKWKIDGTERRDGVLDSVTDQDSKDSTYSMSSTLSLTKADYESHNLYTCEVVHKTSSSPVVKSFNRNEC.

Residues 5-102 (PTVSIFPPST…SSSPVVKSFN (98 aa)) form the Ig-like domain. A disulfide bridge connects residues Cys-26 and Cys-86.

This Rattus norvegicus (Rat) protein is Ig kappa chain C region, B allele.